We begin with the raw amino-acid sequence, 1182 residues long: Tyrosine-protein kinase ABL2 (1182 aa).

A disordered region spans residues 1-42 (MGQQVGRVGEAPGLQQPQPRGIRGSSAARPSGRRRDPAGRTA). The N-myristoyl glycine moiety is linked to residue G2. The tract at residues 2–106 (GQQVGRVGEA…SKENLLGATE (105 aa)) is CAP. The segment covering 20–30 (RGIRGSSAARP) has biased composition (low complexity). At S97 the chain carries Phosphoserine. An SH3 domain is found at 107–167 (SDPNLFVALY…PSNYITPVNS (61 aa)). Residues Y116, Y161, Y174, Y185, Y218, and Y231 each carry the phosphotyrosine modification. The SH2 domain occupies 173–263 (WYHGPVSRSA…GLVTTLHYPA (91 aa)). A Phosphotyrosine; by ABL1 and autocatalysis modification is found at Y261. The residue at position 272 (Y272) is a Phosphotyrosine; by autocatalysis. Residue S275 is modified to Phosphoserine. The Protein kinase domain occupies 288-539 (ITMKHKLGGG…PSFAETHQAF (252 aa)). Position 294-302 (294-302 (LGGGQYGEV)) interacts with ATP. Y299 and Y303 each carry phosphotyrosine. ATP-binding positions include K317 and 362–368 (EYMPYGN). D409 (proton acceptor) is an active-site residue. The Kinase activation loop motif lies at 427 to 451 (DFGLSRLMTGDTYTAHAGAKFPIKW). Y439 bears the Phosphotyrosine; by autocatalysis and SRC-type Tyr-kinases mark. At Y459 the chain carries Phosphotyrosine. Phosphotyrosine; by autocatalysis is present on Y568. Phosphoserine occurs at positions 606, 621, 632, 634, and 656. Disordered stretches follow at residues 612–642 (IRST…DAKE) and 655–674 (SSFM…SSFR). Positions 659–661 (KKR) match the Nuclear localization signal motif. Phosphoserine occurs at positions 670, 671, and 672. Y684 is modified (phosphotyrosine; by autocatalysis). The tract at residues 695-930 (SLQNADGFSV…AVLPTTHNHK (236 aa)) is F-actin-binding. The residue at position 719 (Y719) is a Phosphotyrosine. The interval 765–796 (LRAGKPTASDDTSKPFPRSNSTSSMSSGLPEQ) is disordered. Residue K778 is modified to N6-acetyllysine. Residues 782-793 (RSNSTSSMSSGL) show a composition bias toward polar residues. Phosphoserine is present on S785. T802 bears the Phosphothreonine mark. Over residues 809-825 (RSKLQLERTVSTSSQPE) the composition is skewed to polar residues. The disordered stretch occupies residues 809 to 858 (RSKLQLERTVSTSSQPEENVDRANDMLPKKSEEGAAPARERPKAKLLPRG). Phosphoserine occurs at positions 819 and 822. The segment covering 827–851 (NVDRANDMLPKKSEEGAAPARERPK) has biased composition (basic and acidic residues). Residues S915 and S936 each carry the phosphoserine modification. Residues 964–1059 (HQVTSSGDKD…TSSISPAKMA (96 aa)) are disordered. The tract at residues 1020 to 1182 (EGGKKAAPGP…VQEISDVVQR (163 aa)) is F-actin-binding.

The protein belongs to the protein kinase superfamily. Tyr protein kinase family. ABL subfamily. In terms of assembly, interacts with PSMA7. Interacts with CTTN. Found in a complex with ABL1, ABL2, CRK and UNC119; leading to the inhibition of CRK phosphorylation by ABL kinases. Requires Mg(2+) as cofactor. Mn(2+) serves as cofactor. Post-translationally, phosphorylated at Tyr-261 by ABL1 in response to oxidative stress. Phosphorylated by PDGFRB. Polyubiquitinated. Polyubiquitination of ABL2 leads to degradation. As to expression, most abundant in adult mouse brain, especially in synapse-rich regions.

The protein localises to the cytoplasm. It is found in the cytoskeleton. It carries out the reaction L-tyrosyl-[protein] + ATP = O-phospho-L-tyrosyl-[protein] + ADP + H(+). Stabilized in the inactive form by an association between the SH3 domain and the SH2-TK linker region, interactions of the N-terminal cap, and contributions from an N-terminal myristoyl group and phospholipids. Activated by autophosphorylation as well as by SRC-family kinase-mediated phosphorylation. Activated by RIN1 binding to the SH2 and SH3 domains. Inhibited by imatinib mesylate (Gleevec). Phosphatidylinositol 4,5-bisphosphate (PIP2), a highly abundant phosphoinositide known to regulate cytoskeletal and membrane proteins, inhibits the tyrosine kinase activity. Its function is as follows. Non-receptor tyrosine-protein kinase that plays an ABL1-overlapping role in key processes linked to cell growth and survival such as cytoskeleton remodeling in response to extracellular stimuli, cell motility and adhesion, receptor endocytosis, autophagy, DNA damage response and apoptosis. Coordinates actin remodeling through tyrosine phosphorylation of proteins controlling cytoskeleton dynamics like MYH10 (involved in movement); CTTN (involved in signaling); or TUBA1 and TUBB (microtubule subunits). Binds directly F-actin and regulates actin cytoskeletal structure through its F-actin-bundling activity. Involved in the regulation of cell adhesion and motility through phosphorylation of key regulators of these processes such as CRK, CRKL or DOK1. Required for adhesion-dependent phosphorylation of ARHGAP35 which promotes its association with RASA1, resulting in recruitment of ARHGAP35 to the cell periphery where it inhibits RHO. Phosphorylates multiple receptor tyrosine kinases like PDGFRB and other substrates which are involved in endocytosis regulation such as RIN1. In brain, may regulate neurotransmission by phosphorylating proteins at the synapse. Finally, functions as its own regulator through autocatalytic activity as well as through phosphorylation of its inhibitor, ABI1. Positively regulates chemokine-mediated T-cell migration, polarization, and homing to lymph nodes and immune-challenged tissues, potentially via activation of NEDD9/HEF1 and RAP1. The sequence is that of Tyrosine-protein kinase ABL2 from Mus musculus (Mouse).